The chain runs to 839 residues: Protein translocase subunit SecA (839 aa).

ATP-binding positions include Gln85, 103–107, and Asp493; that span reads GEGKT. Residues 780–790 show a composition bias toward basic and acidic residues; sequence QIHEQERERAS. Residues 780–839 form a disordered region; it reads QIHEQERERASQRATTAAPQNIQSQQSANTDDLPKVERNEACPCGSGKKFKNCHGRKSFS. A compositionally biased stretch (polar residues) spans 791–809; it reads QRATTAAPQNIQSQQSANT. Residues Cys821, Cys823, Cys832, and His833 each coordinate Zn(2+). A compositionally biased stretch (basic residues) spans 827–839; that stretch reads KKFKNCHGRKSFS.

Belongs to the SecA family. In terms of assembly, monomer and homodimer. Part of the essential Sec protein translocation apparatus which comprises SecA, SecYEG and auxiliary proteins SecDF. Other proteins may also be involved. It depends on Zn(2+) as a cofactor.

Its subcellular location is the cell membrane. The protein resides in the cytoplasm. The enzyme catalyses ATP + H2O + cellular proteinSide 1 = ADP + phosphate + cellular proteinSide 2.. In terms of biological role, part of the Sec protein translocase complex. Interacts with the SecYEG preprotein conducting channel. Has a central role in coupling the hydrolysis of ATP to the transfer of proteins into and across the cell membrane, serving as an ATP-driven molecular motor driving the stepwise translocation of polypeptide chains across the membrane. This is Protein translocase subunit SecA from Streptococcus pyogenes serotype M1.